A 227-amino-acid polypeptide reads, in one-letter code: Cytochrome c oxidase subunit 2 (227 aa).

The Mitochondrial intermembrane portion of the chain corresponds to 1–14; it reads MAYPLQLGLQDASS. A helical transmembrane segment spans residues 15–45; the sequence is PIMEELMNFHDHTLMIVFLISSLVLYLISLM. The Mitochondrial matrix segment spans residues 46-59; it reads LTTKLIHTSTMDAQ. A helical transmembrane segment spans residues 60–87; that stretch reads EVETVWTILPAIILILIALPSLRILYMM. Over 88-227 the chain is Mitochondrial intermembrane; that stretch reads DEINNPVLTV…LFENWSLSLT (140 aa). Cu cation-binding residues include His-161, Cys-196, Glu-198, Cys-200, His-204, and Met-207. Position 198 (Glu-198) interacts with Mg(2+).

This sequence belongs to the cytochrome c oxidase subunit 2 family. Component of the cytochrome c oxidase (complex IV, CIV), a multisubunit enzyme composed of 14 subunits. The complex is composed of a catalytic core of 3 subunits MT-CO1, MT-CO2 and MT-CO3, encoded in the mitochondrial DNA, and 11 supernumerary subunits COX4I, COX5A, COX5B, COX6A, COX6B, COX6C, COX7A, COX7B, COX7C, COX8 and NDUFA4, which are encoded in the nuclear genome. The complex exists as a monomer or a dimer and forms supercomplexes (SCs) in the inner mitochondrial membrane with NADH-ubiquinone oxidoreductase (complex I, CI) and ubiquinol-cytochrome c oxidoreductase (cytochrome b-c1 complex, complex III, CIII), resulting in different assemblies (supercomplex SCI(1)III(2)IV(1) and megacomplex MCI(2)III(2)IV(2)). Found in a complex with TMEM177, COA6, COX18, COX20, SCO1 and SCO2. Interacts with TMEM177 in a COX20-dependent manner. Interacts with COX20. Interacts with COX16. It depends on Cu cation as a cofactor.

The protein resides in the mitochondrion inner membrane. It carries out the reaction 4 Fe(II)-[cytochrome c] + O2 + 8 H(+)(in) = 4 Fe(III)-[cytochrome c] + 2 H2O + 4 H(+)(out). Its function is as follows. Component of the cytochrome c oxidase, the last enzyme in the mitochondrial electron transport chain which drives oxidative phosphorylation. The respiratory chain contains 3 multisubunit complexes succinate dehydrogenase (complex II, CII), ubiquinol-cytochrome c oxidoreductase (cytochrome b-c1 complex, complex III, CIII) and cytochrome c oxidase (complex IV, CIV), that cooperate to transfer electrons derived from NADH and succinate to molecular oxygen, creating an electrochemical gradient over the inner membrane that drives transmembrane transport and the ATP synthase. Cytochrome c oxidase is the component of the respiratory chain that catalyzes the reduction of oxygen to water. Electrons originating from reduced cytochrome c in the intermembrane space (IMS) are transferred via the dinuclear copper A center (CU(A)) of subunit 2 and heme A of subunit 1 to the active site in subunit 1, a binuclear center (BNC) formed by heme A3 and copper B (CU(B)). The BNC reduces molecular oxygen to 2 water molecules using 4 electrons from cytochrome c in the IMS and 4 protons from the mitochondrial matrix. In Taterillus emini (Emin's gerbil), this protein is Cytochrome c oxidase subunit 2 (MT-CO2).